The chain runs to 325 residues: Protein translocase subunit SecF (325 aa).

Helical transmembrane passes span 36 to 56, 148 to 168, 175 to 197, 202 to 224, 254 to 274, and 281 to 301; these read GYIL…TKGF, LAQG…IYVG, LGFG…FSAL, DLTF…IVVF, TIIT…FGGP, and LALL…AIAI.

It belongs to the SecD/SecF family. SecF subfamily. Forms a complex with SecD. Part of the essential Sec protein translocation apparatus which comprises SecA, SecYEG and auxiliary proteins SecDF-YajC and YidC.

The protein localises to the cell inner membrane. Part of the Sec protein translocase complex. Interacts with the SecYEG preprotein conducting channel. SecDF uses the proton motive force (PMF) to complete protein translocation after the ATP-dependent function of SecA. The polypeptide is Protein translocase subunit SecF (Haemophilus influenzae (strain ATCC 51907 / DSM 11121 / KW20 / Rd)).